The chain runs to 129 residues: Holo-[acyl-carrier-protein] synthase (129 aa).

Positions 8 and 60 each coordinate Mg(2+).

It belongs to the P-Pant transferase superfamily. AcpS family. Mg(2+) is required as a cofactor.

It is found in the cytoplasm. The enzyme catalyses apo-[ACP] + CoA = holo-[ACP] + adenosine 3',5'-bisphosphate + H(+). Transfers the 4'-phosphopantetheine moiety from coenzyme A to a Ser of acyl-carrier-protein. The chain is Holo-[acyl-carrier-protein] synthase from Anaeromyxobacter sp. (strain Fw109-5).